Consider the following 591-residue polypeptide: Eukaryotic translation initiation factor 3 subunit D (591 aa).

The interval 100–159 (SGGNPDEDAAFRLVDGKPPPRPKFGPKWRFNPHHNRNQLPQRRDEEVEAKKRDAEKERAR) is disordered. The segment covering 123–135 (FGPKWRFNPHHNR) has biased composition (basic residues). The segment covering 140–159 (QRRDEEVEAKKRDAEKERAR) has biased composition (basic and acidic residues). Residues 309-323 (QLDLLSVHETSQEPL) form an RNA gate region. Residues 549–560 (DYVEEPLPEDEQ) show a composition bias toward acidic residues. The disordered stretch occupies residues 549–591 (DYVEEPLPEDEQVQPTEENTEGAEASVAATKETEEKKADDAQA). Positions 579–591 (KETEEKKADDAQA) are enriched in basic and acidic residues.

It belongs to the eIF-3 subunit D family. Component of the eukaryotic translation initiation factor 3 (eIF-3) complex, which is composed of at least 13 different subunits.

The protein localises to the cytoplasm. Its function is as follows. mRNA cap-binding component of the eukaryotic translation initiation factor 3 (eIF-3) complex, which is involved in protein synthesis of a specialized repertoire of mRNAs and, together with other initiation factors, stimulates binding of mRNA and methionyl-tRNAi to the 40S ribosome. The eIF-3 complex specifically targets and initiates translation of a subset of mRNAs involved in cell proliferation. In the eIF-3 complex, eif3d specifically recognizes and binds the 7-methylguanosine cap of a subset of mRNAs. In Arabidopsis thaliana (Mouse-ear cress), this protein is Eukaryotic translation initiation factor 3 subunit D (TIF3D1).